We begin with the raw amino-acid sequence, 189 residues long: uncharacterized protein (189 aa).

4 helical membrane-spanning segments follow: residues 35–55 (IIWY…AVMK), 97–117 (GVLQ…ALHF), 123–143 (WLLF…YEWT), and 144–164 (GNLF…ACQI).

It is found in the cell membrane. This is an uncharacterized protein from Bacillus subtilis (strain 168).